The sequence spans 487 residues: uncharacterized protein (487 aa).

A helical transmembrane segment spans residues 7–28 (HVISIFETLGAYFINIFYNFLY). N-linked (GlcNAc...) asparagine; by host glycans are attached at residues asparagine 73, asparagine 83, and asparagine 195. Residues 196-235 (RSLLHQIEELTSEKKSLLADLSTLRKKYEKRQSEYRRLVQ) adopt a coiled-coil conformation. Residues 294–305 (TSQELTSKSPNN) show a composition bias toward polar residues. The segment at 294–324 (TSQELTSKSPNNYPVPHSRTIVSKPSDNYPV) is disordered. N-linked (GlcNAc...) asparagine; by host glycosylation occurs at asparagine 462.

It belongs to the asfivirus B475L family.

The protein localises to the host membrane. This is an uncharacterized protein from African swine fever virus (isolate Tick/South Africa/Pretoriuskop Pr4/1996) (ASFV).